A 202-amino-acid chain; its full sequence is Glycerol-3-phosphate acyltransferase (202 aa).

The next 6 helical transmembrane spans lie at 3-23, 61-81, 87-107, 117-137, 144-164, and 167-187; these read NLII…LILT, IATI…LKFL, LLWS…YLLF, AGAM…VWAV, ISSL…FIFN, and LEIH…YKHL.

The protein belongs to the PlsY family. Probably interacts with PlsX.

The protein resides in the cell inner membrane. The enzyme catalyses an acyl phosphate + sn-glycerol 3-phosphate = a 1-acyl-sn-glycero-3-phosphate + phosphate. It participates in lipid metabolism; phospholipid metabolism. Functionally, catalyzes the transfer of an acyl group from acyl-phosphate (acyl-PO(4)) to glycerol-3-phosphate (G3P) to form lysophosphatidic acid (LPA). This enzyme utilizes acyl-phosphate as fatty acyl donor, but not acyl-CoA or acyl-ACP. The polypeptide is Glycerol-3-phosphate acyltransferase (Campylobacter jejuni subsp. doylei (strain ATCC BAA-1458 / RM4099 / 269.97)).